The sequence spans 251 residues: 1-(5-phosphoribosyl)-5-[(5-phosphoribosylamino)methylideneamino] imidazole-4-carboxamide isomerase (251 aa).

The active-site Proton acceptor is aspartate 8. Residue aspartate 131 is the Proton donor of the active site.

This sequence belongs to the HisA/HisF family.

Its subcellular location is the cytoplasm. It catalyses the reaction 1-(5-phospho-beta-D-ribosyl)-5-[(5-phospho-beta-D-ribosylamino)methylideneamino]imidazole-4-carboxamide = 5-[(5-phospho-1-deoxy-D-ribulos-1-ylimino)methylamino]-1-(5-phospho-beta-D-ribosyl)imidazole-4-carboxamide. Its pathway is amino-acid biosynthesis; L-histidine biosynthesis; L-histidine from 5-phospho-alpha-D-ribose 1-diphosphate: step 4/9. The sequence is that of 1-(5-phosphoribosyl)-5-[(5-phosphoribosylamino)methylideneamino] imidazole-4-carboxamide isomerase from Burkholderia thailandensis (strain ATCC 700388 / DSM 13276 / CCUG 48851 / CIP 106301 / E264).